The chain runs to 462 residues: Fumarate hydratase class II (462 aa).

Substrate contacts are provided by residues 98–100 (SGT), Arg-126, 129–132 (HPND), 139–141 (SSN), and Thr-187. The disordered stretch occupies residues 120–141 (GTRGKGRKVHPNDHVNKGQSSN). His-188 acts as the Proton donor/acceptor in catalysis. Ser-318 is a catalytic residue. Residues Ser-319 and 324–326 (KVN) each bind substrate.

This sequence belongs to the class-II fumarase/aspartase family. Fumarase subfamily. In terms of assembly, homotetramer.

It localises to the cytoplasm. It catalyses the reaction (S)-malate = fumarate + H2O. It functions in the pathway carbohydrate metabolism; tricarboxylic acid cycle; (S)-malate from fumarate: step 1/1. Its function is as follows. Involved in the TCA cycle. Catalyzes the stereospecific interconversion of fumarate to L-malate. This chain is Fumarate hydratase class II, found in Nitrosomonas europaea (strain ATCC 19718 / CIP 103999 / KCTC 2705 / NBRC 14298).